We begin with the raw amino-acid sequence, 98 residues long: Large ribosomal subunit protein eL14 (98 aa).

Belongs to the eukaryotic ribosomal protein eL14 family.

In Thermofilum pendens (strain DSM 2475 / Hrk 5), this protein is Large ribosomal subunit protein eL14.